The chain runs to 473 residues: Sucrose-6-phosphate hydrolase (473 aa).

Residues 44 to 47 (LLND), Gln-63, 106 to 107 (YS), 167 to 168 (RD), and Glu-224 contribute to the substrate site. The active site involves Asp-47.

This sequence belongs to the glycosyl hydrolase 32 family.

The protein localises to the cytoplasm. It carries out the reaction Hydrolysis of terminal non-reducing beta-D-fructofuranoside residues in beta-D-fructofuranosides.. The protein operates within glycan biosynthesis; sucrose metabolism. This is Sucrose-6-phosphate hydrolase (scrB) from Lactococcus lactis subsp. lactis (Streptococcus lactis).